The primary structure comprises 232 residues: Phosphoribosylformylglycinamidine synthase subunit PurQ (232 aa).

The Glutamine amidotransferase type-1 domain maps to 3–232 (FAVIVFPGSN…SLVASALAVV (230 aa)). Catalysis depends on cysteine 86, which acts as the Nucleophile. Catalysis depends on residues histidine 203 and glutamate 205.

As to quaternary structure, part of the FGAM synthase complex composed of 1 PurL, 1 PurQ and 2 PurS subunits.

The protein resides in the cytoplasm. The catalysed reaction is N(2)-formyl-N(1)-(5-phospho-beta-D-ribosyl)glycinamide + L-glutamine + ATP + H2O = 2-formamido-N(1)-(5-O-phospho-beta-D-ribosyl)acetamidine + L-glutamate + ADP + phosphate + H(+). The enzyme catalyses L-glutamine + H2O = L-glutamate + NH4(+). Its pathway is purine metabolism; IMP biosynthesis via de novo pathway; 5-amino-1-(5-phospho-D-ribosyl)imidazole from N(2)-formyl-N(1)-(5-phospho-D-ribosyl)glycinamide: step 1/2. Its function is as follows. Part of the phosphoribosylformylglycinamidine synthase complex involved in the purines biosynthetic pathway. Catalyzes the ATP-dependent conversion of formylglycinamide ribonucleotide (FGAR) and glutamine to yield formylglycinamidine ribonucleotide (FGAM) and glutamate. The FGAM synthase complex is composed of three subunits. PurQ produces an ammonia molecule by converting glutamine to glutamate. PurL transfers the ammonia molecule to FGAR to form FGAM in an ATP-dependent manner. PurS interacts with PurQ and PurL and is thought to assist in the transfer of the ammonia molecule from PurQ to PurL. The chain is Phosphoribosylformylglycinamidine synthase subunit PurQ from Gloeobacter violaceus (strain ATCC 29082 / PCC 7421).